The primary structure comprises 901 residues: Probable inorganic carbon transporter subunit DabA (901 aa).

Zn(2+) is bound by residues C424, D426, H606, and C621.

This sequence belongs to the inorganic carbon transporter (TC 9.A.2) DabA family. As to quaternary structure, forms a complex with DabB. Requires Zn(2+) as cofactor.

It localises to the cell membrane. Its function is as follows. Part of an energy-coupled inorganic carbon pump. This chain is Probable inorganic carbon transporter subunit DabA, found in Staphylococcus aureus (strain NCTC 8325 / PS 47).